Consider the following 574-residue polypeptide: Transmembrane protein 108 (574 aa).

A helical transmembrane segment spans residues 9-29 (YCQLLSFLLTLALTKALVLAV). The tract at residues 31–169 (EPSPRESLQT…ATTRRPPRPP (139 aa)) is interaction with SH3GL2. Disordered stretches follow at residues 32–352 (PSPR…SGVF) and 364–417 (DATV…PRPL). The span at 58-86 (TRLSSVLTLNPTPDGPSSQAAATLETTVS) shows a compositional bias: polar residues. Over residues 132–160 (LPPGDATPTTTLPTKPAGTTSRPTVAPRA) the composition is skewed to low complexity. The interaction with DST (isoform 1) stretch occupies residues 173–406 (RKGAGGSTRT…SPAEEEAEAS (234 aa)). A compositionally biased stretch (polar residues) spans 245–271 (FSSTQPQTVSPATAPRSTSRVPPTTSL). Residues 292-312 (TSPGGEPAATAATGAPASTQP) are compositionally biased toward low complexity. The span at 316-332 (PSQSPHGDVQDSASHSD) shows a compositional bias: polar residues. A helical transmembrane segment spans residues 468–488 (IAWVIVAISVPISSCSVLLTV). The tract at residues 489–574 (CCMRRKKKTA…FVGNDQVSEI (86 aa)) is interaction with CYFIP2.

As to quaternary structure, interacts with DST (isoform 1). Interacts with SH3GL2. Interacts (via N-terminus) with CYFIP1 and CYFIP2; the interactions associate TMEM108 with the WAVE1 complex. Glycosylated. As to expression, expressed in the nervous system tissues, such as hippocampus and spinal cord, is barely detectable in peripheral tissues such as heart, lung, liver, kidney and muscle. In brain, highly expressed in dentate gyrus neurons and expressed in cortex, olfactory bulb, ammon's horn, cerebellum, hypothalamus and striatum.

The protein localises to the membrane. It localises to the postsynaptic density. It is found in the endosome membrane. The protein resides in the cell projection. Its subcellular location is the axon. The protein localises to the dendrite. It localises to the early endosome. Its function is as follows. Transmembrane protein required for proper cognitive functions. Involved in the development of dentate gyrus (DG) neuron circuitry, is necessary for AMPA receptors surface expression and proper excitatory postsynaptic currents of DG granule neurons. Regulates the organization and stability of the microtubule network of sensory neurons to allow axonal transport. Through the interaction with DST, mediates the docking of the dynein/dynactin motor complex to vesicle cargos for retrograde axonal transport. In hippocampal neurons, required for BDNF-dependent dendrite outgrowth. Cooperates with SH3GL2 and recruits the WAVE1 complex to facilitate actin-dependent BDNF:NTRK2 early endocytic trafficking and mediate signaling from early endosomes. The sequence is that of Transmembrane protein 108 from Mus musculus (Mouse).